We begin with the raw amino-acid sequence, 307 residues long: Homoserine O-acetyltransferase (307 aa).

C142 functions as the Acyl-thioester intermediate in the catalytic mechanism. Substrate-binding residues include K163 and S192. H235 (proton acceptor) is an active-site residue. The active site involves E237. A substrate-binding site is contributed by R249.

It belongs to the MetA family.

The protein localises to the cytoplasm. It catalyses the reaction L-homoserine + acetyl-CoA = O-acetyl-L-homoserine + CoA. The protein operates within amino-acid biosynthesis; L-methionine biosynthesis via de novo pathway; O-acetyl-L-homoserine from L-homoserine: step 1/1. Its function is as follows. Transfers an acetyl group from acetyl-CoA to L-homoserine, forming acetyl-L-homoserine. The polypeptide is Homoserine O-acetyltransferase (Rhizobium johnstonii (strain DSM 114642 / LMG 32736 / 3841) (Rhizobium leguminosarum bv. viciae)).